The primary structure comprises 467 residues: Putative alpha-amylase (467 aa).

Glutamate 145 (nucleophile) is an active-site residue.

Belongs to the glycosyl hydrolase 57 family.

It carries out the reaction Endohydrolysis of (1-&gt;4)-alpha-D-glucosidic linkages in polysaccharides containing three or more (1-&gt;4)-alpha-linked D-glucose units.. In Methanocaldococcus jannaschii (strain ATCC 43067 / DSM 2661 / JAL-1 / JCM 10045 / NBRC 100440) (Methanococcus jannaschii), this protein is Putative alpha-amylase.